The chain runs to 52 residues: Unknown protein from spot 415 of 2D-PAGE of etiolated coleoptile (52 aa).

This chain is Unknown protein from spot 415 of 2D-PAGE of etiolated coleoptile, found in Zea mays (Maize).